The chain runs to 544 residues: Zinc finger protein 502 (544 aa).

Residue lysine 43 forms a Glycyl lysine isopeptide (Lys-Gly) (interchain with G-Cter in SUMO2) linkage. 14 consecutive C2H2-type zinc fingers follow at residues 155–177, 183–205, 211–233, 239–261, 267–289, 295–317, 323–345, 351–373, 379–401, 407–429, 435–457, 463–485, 491–513, and 519–541; these read WKCN…QRTH, YTCE…QRIH, YGCE…QRIH, YKCN…QRIH, YICS…QRIH, HKCD…QRIH, YKCK…QRIH, YKCS…QRSH, YKCN…MRIH, YKCK…HRTH, YKCS…YRIH, and YECI…QKLH.

The protein belongs to the krueppel C2H2-type zinc-finger protein family. As to quaternary structure, (Microbial infection) Interacts with human respiratory syncytial virus (HRSV) matrix protein; this interaction probably facilitates viral release.

The protein resides in the nucleus. In terms of biological role, may be involved in transcriptional regulation. This chain is Zinc finger protein 502 (ZNF502), found in Homo sapiens (Human).